The following is a 319-amino-acid chain: Plasmodesmata-located protein 4 (319 aa).

The signal sequence occupies residues 1-26 (MVVHLISLLTQTLALIILSLPSIINT). Topologically, residues 27 to 288 (SQLDYDTLVF…EGSKVNTGKS (262 aa)) are extracellular. Intrachain disulfides connect Cys39–Cys127, Cys103–Cys112, Cys115–Cys140, Cys177–Cys247, Cys223–Cys232, and Cys235–Cys260. 2 consecutive Gnk2-homologous domains span residues 45 to 149 (NILQ…FERI) and 170 to 269 (HGLI…YHPH). Residues 289–309 (LAIVVGGVAALVFVAIFFMFL) traverse the membrane as a helical segment. The tract at residues 289–309 (LAIVVGGVAALVFVAIFFMFL) is necessary and sufficient for plasmodesmal targeting. The Cytoplasmic portion of the chain corresponds to 310–319 (KSLRKKGDDC).

Belongs to the cysteine-rich repeat secretory protein family. Plasmodesmata-located proteins (PDLD) subfamily. As to quaternary structure, (Microbial infection) Interacts with Grapevine fanleaf virus (GFLV) 2B-MP. As to expression, highly expressed in seeds and roots.

Its subcellular location is the cell membrane. The protein localises to the cell junction. It localises to the plasmodesma. Modulates cell-to-cell trafficking. The polypeptide is Plasmodesmata-located protein 4 (Arabidopsis thaliana (Mouse-ear cress)).